A 379-amino-acid polypeptide reads, in one-letter code: Queuine tRNA-ribosyltransferase (379 aa).

D94 (proton acceptor) is an active-site residue. Residues 94-98, D148, Q191, and G218 contribute to the substrate site; that span reads DSGGF. The RNA binding stretch occupies residues 249–255; the sequence is GVGSPDS. D268 serves as the catalytic Nucleophile. Residues 273–277 are RNA binding; important for wobble base 34 recognition; the sequence is TRIAR. Zn(2+) is bound by residues C306, C308, C311, and H337.

This sequence belongs to the queuine tRNA-ribosyltransferase family. Homodimer. Within each dimer, one monomer is responsible for RNA recognition and catalysis, while the other monomer binds to the replacement base PreQ1. Zn(2+) serves as cofactor.

The enzyme catalyses 7-aminomethyl-7-carbaguanine + guanosine(34) in tRNA = 7-aminomethyl-7-carbaguanosine(34) in tRNA + guanine. The protein operates within tRNA modification; tRNA-queuosine biosynthesis. Its function is as follows. Catalyzes the base-exchange of a guanine (G) residue with the queuine precursor 7-aminomethyl-7-deazaguanine (PreQ1) at position 34 (anticodon wobble position) in tRNAs with GU(N) anticodons (tRNA-Asp, -Asn, -His and -Tyr). Catalysis occurs through a double-displacement mechanism. The nucleophile active site attacks the C1' of nucleotide 34 to detach the guanine base from the RNA, forming a covalent enzyme-RNA intermediate. The proton acceptor active site deprotonates the incoming PreQ1, allowing a nucleophilic attack on the C1' of the ribose to form the product. After dissociation, two additional enzymatic reactions on the tRNA convert PreQ1 to queuine (Q), resulting in the hypermodified nucleoside queuosine (7-(((4,5-cis-dihydroxy-2-cyclopenten-1-yl)amino)methyl)-7-deazaguanosine). The protein is Queuine tRNA-ribosyltransferase of Bacillus anthracis (strain CDC 684 / NRRL 3495).